The sequence spans 354 residues: Inositol-tetrakisphosphate 1-kinase 1 (354 aa).

Positions 1-16 (MRVHEEASEDKEREVE) are enriched in basic and acidic residues. Residues 1–24 (MRVHEEASEDKEREVEEAPDLMPL) form a disordered region. The 1D-myo-inositol 1,3,4-trisphosphate site is built by lysine 53 and lysine 95. Residues arginine 130 and lysine 180 each contribute to the ATP site. The ATP-grasp domain maps to 140–347 (LNLSNAYGEV…FLLSLVQNKY (208 aa)). Histidine 191 and lysine 223 together coordinate 1D-myo-inositol 1,3,4-trisphosphate. Residues 212-223 (QEFVNHGGILFK) and serine 238 each bind ATP. Residues aspartate 303, aspartate 318, and asparagine 320 each coordinate Mg(2+). Asparagine 320 is a binding site for 1D-myo-inositol 1,3,4-trisphosphate.

Belongs to the ITPK1 family. Monomer. The cofactor is Mg(2+). In terms of tissue distribution, expressed in roots, leaves, flowers, anthers and embryos.

It catalyses the reaction 1D-myo-inositol 3,4,5,6-tetrakisphosphate + ATP = 1D-myo-inositol 1,3,4,5,6-pentakisphosphate + ADP + H(+). The catalysed reaction is 1D-myo-inositol 1,3,4-trisphosphate + ATP = 1D-myo-inositol 1,3,4,5-tetrakisphosphate + ADP + H(+). The enzyme catalyses 1D-myo-inositol 1,3,4-trisphosphate + ATP = 1D-myo-inositol 1,3,4,6-tetrakisphosphate + ADP + H(+). Functionally, kinase that can phosphorylate various inositol polyphosphate such as Ins(3,4,5,6)P4 or Ins(1,3,4)P3 and participates in phytic acid biosynthesis in developing seeds. Phytic acid is the primary storage form of phosphorus in cereal grains and other plant seeds. This Oryza sativa subsp. japonica (Rice) protein is Inositol-tetrakisphosphate 1-kinase 1.